Here is a 176-residue protein sequence, read N- to C-terminus: Large ribosomal subunit protein uL6 (176 aa).

The protein belongs to the universal ribosomal protein uL6 family. In terms of assembly, part of the 50S ribosomal subunit.

Its function is as follows. This protein binds to the 23S rRNA, and is important in its secondary structure. It is located near the subunit interface in the base of the L7/L12 stalk, and near the tRNA binding site of the peptidyltransferase center. In Burkholderia lata (strain ATCC 17760 / DSM 23089 / LMG 22485 / NCIMB 9086 / R18194 / 383), this protein is Large ribosomal subunit protein uL6.